The sequence spans 377 residues: Serine protease grass (377 aa).

The N-terminal stretch at 1 to 26 is a signal peptide; it reads MMIASSLAVLYGIAIVSSMGVQSARA. The 59-residue stretch at 31–89 folds into the Clip domain; the sequence is DCTTPDGDQGQCMPFSSCRTIEERLTEAQKAGQKVPADYASYLQKALCGEFNGVRHFCC. Cystine bridges form between cysteine 32-cysteine 88, cysteine 42-cysteine 78, cysteine 48-cysteine 89, cysteine 111-cysteine 243, cysteine 148-cysteine 164, and cysteine 188-cysteine 197. Residues 91–118 form a linker region; it reads SANIQHNSKVMSLFKDENFDCGNFLSQR. The region spanning 119–373 is the Peptidase S1 domain; that stretch reads VSNGYEVKLS…YVQWITDTMA (255 aa). Histidine 163 serves as the catalytic Charge relay system. Ca(2+)-binding residues include glutamate 179, arginine 181, threonine 184, and aspartate 187. Aspartate 223 serves as the catalytic Charge relay system. Residues asparagine 230 and asparagine 270 are each glycosylated (N-linked (GlcNAc...) asparagine). Cystine bridges form between cysteine 290–cysteine 304 and cysteine 314–cysteine 349. Serine 318 serves as the catalytic Charge relay system.

The protein belongs to the peptidase S1 family. CLIP subfamily. In terms of processing, proteolytically cleaved by a tryspin-like protease which is likely to activate grass.

Its subcellular location is the secreted. Endopeptidase. Plays a key role in innate immunity by activating the Toll pathway in response to fungal and Gram-positive bacterial infections, presumably downstream of pattern-recognition receptors (PRR), such as PGRP-SA, GNBP1 and GNBP3, and upstream of spz processing enzyme SPE. The polypeptide is Serine protease grass (Drosophila melanogaster (Fruit fly)).